The sequence spans 560 residues: DNA ligase B (560 aa).

Residue K124 is the N6-AMP-lysine intermediate of the active site.

Belongs to the NAD-dependent DNA ligase family. LigB subfamily.

It carries out the reaction NAD(+) + (deoxyribonucleotide)n-3'-hydroxyl + 5'-phospho-(deoxyribonucleotide)m = (deoxyribonucleotide)n+m + AMP + beta-nicotinamide D-nucleotide.. Functionally, catalyzes the formation of phosphodiester linkages between 5'-phosphoryl and 3'-hydroxyl groups in double-stranded DNA using NAD as a coenzyme and as the energy source for the reaction. The protein is DNA ligase B of Shigella sonnei (strain Ss046).